The chain runs to 288 residues: Proteasome assembly chaperone 1 (288 aa).

Positions 1–37 are disordered; sequence MAATFFGEVVKAPCRAGTEDEEEEDEGRRETPEDREV. Ala2 carries the N-acetylalanine modification. Thr18 bears the Phosphothreonine mark. A compositionally biased stretch (basic and acidic residues) spans 26 to 37; that stretch reads EGRRETPEDREV. The residue at position 54 (Thr54) is a Phosphothreonine. Ser180 is subject to Phosphoserine. Lys264 is subject to N6-acetyllysine.

It belongs to the PSMG1 family. As to quaternary structure, forms a heterodimer with PSMG2. The PSMG1-PSMG2 heterodimer interacts directly with the PSMA5 and PSMA7 proteasome alpha subunits. Post-translationally, degraded by the proteasome upon completion of 20S proteasome maturation.

The protein localises to the cytoplasm. Its subcellular location is the endoplasmic reticulum. Chaperone protein which promotes assembly of the 20S proteasome as part of a heterodimer with PSMG2. The PSMG1-PSMG2 heterodimer binds to the PSMA5 and PSMA7 proteasome subunits, promotes assembly of the proteasome alpha subunits into the heteroheptameric alpha ring and prevents alpha ring dimerization. The protein is Proteasome assembly chaperone 1 (PSMG1) of Callithrix jacchus (White-tufted-ear marmoset).